The following is a 773-amino-acid chain: Lon protease homolog 2, peroxisomal (773 aa).

The 190-residue stretch at 9–198 (LPVIVVDSGV…MCEKWMQMQR (190 aa)) folds into the Lon N-terminal domain. Residue 336–343 (GPPGIGKT) participates in ATP binding. The Lon proteolytic domain maps to 587–766 (PLPPGVCFGL…EDVIEAMMEK (180 aa)). Catalysis depends on residues serine 672 and lysine 715. The Microbody targeting signal motif lies at 771 to 773 (AKL).

Belongs to the peptidase S16 family.

It localises to the peroxisome matrix. The catalysed reaction is Hydrolysis of proteins in presence of ATP.. In terms of biological role, ATP-dependent serine protease that mediates the selective degradation of misfolded and unassembled polypeptides in the peroxisomal matrix. Necessary for type 2 peroxisome targeting signal (PTS2)-containing protein processing and facilitates peroxisome matrix protein import. The polypeptide is Lon protease homolog 2, peroxisomal (Caenorhabditis briggsae).